Consider the following 158-residue polypeptide: SsrA-binding protein (158 aa).

Belongs to the SmpB family.

It localises to the cytoplasm. Functionally, required for rescue of stalled ribosomes mediated by trans-translation. Binds to transfer-messenger RNA (tmRNA), required for stable association of tmRNA with ribosomes. tmRNA and SmpB together mimic tRNA shape, replacing the anticodon stem-loop with SmpB. tmRNA is encoded by the ssrA gene; the 2 termini fold to resemble tRNA(Ala) and it encodes a 'tag peptide', a short internal open reading frame. During trans-translation Ala-aminoacylated tmRNA acts like a tRNA, entering the A-site of stalled ribosomes, displacing the stalled mRNA. The ribosome then switches to translate the ORF on the tmRNA; the nascent peptide is terminated with the 'tag peptide' encoded by the tmRNA and targeted for degradation. The ribosome is freed to recommence translation, which seems to be the essential function of trans-translation. The sequence is that of SsrA-binding protein from Chloroflexus aggregans (strain MD-66 / DSM 9485).